A 1030-amino-acid chain; its full sequence is Halotolerance protein 9 (1030 aa).

The segment at residues 136–166 (CDHCRKRKIRCDEVDQQTKKCSNCIKFQLPC) is a DNA-binding region (zn(2)-C6 fungal-type). Residues 185–208 (HHATPGESLQTSNSISNPVASSSV) form a disordered region. The segment covering 196-208 (SNSISNPVASSSV) has biased composition (low complexity). Serine 221 and serine 937 each carry phosphoserine.

Its subcellular location is the cytoplasm. It is found in the nucleus. Its function is as follows. Putative transcription factor involved in halotolerance. This chain is Halotolerance protein 9 (HAL9), found in Saccharomyces cerevisiae (strain ATCC 204508 / S288c) (Baker's yeast).